A 133-amino-acid chain; its full sequence is 6,7-dimethyl-8-ribityllumazine synthase (133 aa).

5-amino-6-(D-ribitylamino)uracil-binding positions include Phe-11, 43 to 45 (AYD), and 67 to 69 (AIV). 72-73 (DT) provides a ligand contact to (2S)-2-hydroxy-3-oxobutyl phosphate. Residue His-75 is the Proton donor of the active site. Phe-100 provides a ligand contact to 5-amino-6-(D-ribitylamino)uracil. Arg-115 lines the (2S)-2-hydroxy-3-oxobutyl phosphate pocket.

The protein belongs to the DMRL synthase family.

The catalysed reaction is (2S)-2-hydroxy-3-oxobutyl phosphate + 5-amino-6-(D-ribitylamino)uracil = 6,7-dimethyl-8-(1-D-ribityl)lumazine + phosphate + 2 H2O + H(+). Its pathway is cofactor biosynthesis; riboflavin biosynthesis; riboflavin from 2-hydroxy-3-oxobutyl phosphate and 5-amino-6-(D-ribitylamino)uracil: step 1/2. Catalyzes the formation of 6,7-dimethyl-8-ribityllumazine by condensation of 5-amino-6-(D-ribitylamino)uracil with 3,4-dihydroxy-2-butanone 4-phosphate. This is the penultimate step in the biosynthesis of riboflavin. The protein is 6,7-dimethyl-8-ribityllumazine synthase of Halobacterium salinarum (strain ATCC 29341 / DSM 671 / R1).